We begin with the raw amino-acid sequence, 455 residues long: tRNA-2-methylthio-N(6)-dimethylallyladenosine synthase (455 aa).

One can recognise an MTTase N-terminal domain in the interval 3–117 (KGLYIESYGC…LPELIMKATR (115 aa)). C12, C48, C80, C155, C159, and C162 together coordinate [4Fe-4S] cluster. One can recognise a Radical SAM core domain in the interval 141-375 (VSRGVSAFVS…LLTQQRLFTK (235 aa)).

It belongs to the methylthiotransferase family. MiaB subfamily. Monomer. [4Fe-4S] cluster is required as a cofactor.

It is found in the cytoplasm. The enzyme catalyses N(6)-dimethylallyladenosine(37) in tRNA + (sulfur carrier)-SH + AH2 + 2 S-adenosyl-L-methionine = 2-methylsulfanyl-N(6)-dimethylallyladenosine(37) in tRNA + (sulfur carrier)-H + 5'-deoxyadenosine + L-methionine + A + S-adenosyl-L-homocysteine + 2 H(+). Catalyzes the methylthiolation of N6-(dimethylallyl)adenosine (i(6)A), leading to the formation of 2-methylthio-N6-(dimethylallyl)adenosine (ms(2)i(6)A) at position 37 in tRNAs that read codons beginning with uridine. In Anaplasma marginale (strain St. Maries), this protein is tRNA-2-methylthio-N(6)-dimethylallyladenosine synthase.